Consider the following 245-residue polypeptide: Uridylate kinase (245 aa).

12-15 (KLSG) provides a ligand contact to ATP. The tract at residues 20–25 (GEKGVG) is involved in allosteric activation by GTP. G54 is a binding site for UMP. Residues G55 and R59 each contribute to the ATP site. UMP-binding positions include D74 and 135-142 (VGSPYFST). 3 residues coordinate ATP: N163, Y169, and D172.

It belongs to the UMP kinase family. In terms of assembly, homohexamer.

The protein localises to the cytoplasm. The catalysed reaction is UMP + ATP = UDP + ADP. The protein operates within pyrimidine metabolism; CTP biosynthesis via de novo pathway; UDP from UMP (UMPK route): step 1/1. Its activity is regulated as follows. Allosterically activated by GTP. Inhibited by UTP. Its function is as follows. Catalyzes the reversible phosphorylation of UMP to UDP. The sequence is that of Uridylate kinase from Streptococcus mutans serotype c (strain ATCC 700610 / UA159).